The sequence spans 239 residues: DNA damage-regulated autophagy modulator protein 1 (239 aa).

The next 6 helical transmembrane spans lie at 15 to 35 (ILVIWSSAGFLFSYIISVLIG), 54 to 74 (SGVFGFMISVSAMLGAATMYT), 91 to 111 (IYFNKISLAIGLFGCIGMGIV), 119 to 139 (VPAVHDAGALITFICGVMYIL), 162 to 182 (MTVSLIAFIAVVPMSVFSILS), and 201 to 221 (TSAICEWTVAFGFNMYFLTFI).

Belongs to the DRAM/TMEM150 family.

It localises to the lysosome membrane. In terms of biological role, lysosomal modulator of autophagy that plays a central role in p53/TP53-mediated apoptosis. The protein is DNA damage-regulated autophagy modulator protein 1 (dram1) of Xenopus laevis (African clawed frog).